The sequence spans 579 residues: Nuclear hormone receptor family member nhr-22 (579 aa).

Residues 93–173 (SRSCHVCSSP…AGMRRELVQA (81 aa)) constitute a DNA-binding region (nuclear receptor). NR C4-type zinc fingers lie at residues 96-117 (CHVC…CKAC) and 133-161 (CIGT…FIKC). The span at 233-242 (LSPDPSSSQP) shows a compositional bias: low complexity. The tract at residues 233-256 (LSPDPSSSQPLDMTVTPPPLHRST) is disordered. Positions 304–577 (EVENKIFELV…SIMYDLLSFR (274 aa)) constitute an NR LBD domain.

It belongs to the nuclear hormone receptor family.

The protein resides in the nucleus. In terms of biological role, orphan nuclear receptor. The polypeptide is Nuclear hormone receptor family member nhr-22 (nhr-22) (Caenorhabditis elegans).